A 260-amino-acid polypeptide reads, in one-letter code: Snake venom serine proteinase 12 (260 aa).

An N-terminal signal peptide occupies residues 1-18 (MVLIRVLANLLILQLSYA). The propeptide occupies 19 to 24 (QKSSEL). Residues 25–251 (VIGGDECNIN…HLDWIQSIIA (227 aa)) form the Peptidase S1 domain. Disulfide bonds link C31–C163, C50–C66, C98–C258, C142–C212, C174–C191, and C202–C227. The Charge relay system role is filled by H65. A glycan (N-linked (GlcNAc...) asparagine) is linked at N103. Catalysis depends on D110, which acts as the Charge relay system. S206 (charge relay system) is an active-site residue.

It belongs to the peptidase S1 family. Snake venom subfamily. Monomer. Expressed by the venom gland.

It localises to the secreted. Its function is as follows. Snake venom serine protease that may act in the hemostasis system of the prey. The polypeptide is Snake venom serine proteinase 12 (Crotalus adamanteus (Eastern diamondback rattlesnake)).